We begin with the raw amino-acid sequence, 22 residues long: Mu-conotoxin SxIIIC (22 aa).

Cystine bridges form between Cys3–Cys15, Cys4–Cys21, and Cys10–Cys22. Cys22 carries the post-translational modification Cysteine amide.

Belongs to the conotoxin M superfamily. As to expression, expressed by the venom duct.

The protein localises to the secreted. Functionally, mu-conotoxins block voltage-gated sodium channels (Nav). This toxin potently inhibits hNav1.4/SCN4A (IC(50)=15.11 nM). It also displays lower activities on other human subtypes (Nav1.1/SCN1A; IC(50)=132 nM, Nav1.2/SCN2A; IC(50)=363.8, Nav1.3/SCN3A; IC(50)=89.4, Nav1.6/SCN3A; IC(50)=124.9, Nav1.7/SCN7A; IC(50)=152.2). At Nav1.7/SCN9A, it does not elicit change in channel voltage-dependence of fast inactivation or activation, suggesting it acts as a pore blocker. Interestingly, it blocks current inhibition in an irreversible manner (tested during 35 minutes). The sequence is that of Mu-conotoxin SxIIIC from Conus striolatus (Cone snail).